We begin with the raw amino-acid sequence, 162 residues long: 2-C-methyl-D-erythritol 2,4-cyclodiphosphate synthase (162 aa).

A divalent metal cation contacts are provided by Asp-12 and His-14. 4-CDP-2-C-methyl-D-erythritol 2-phosphate contacts are provided by residues 12–14 (DVH) and 38–39 (HS). An a divalent metal cation-binding site is contributed by His-46. 4-CDP-2-C-methyl-D-erythritol 2-phosphate is bound by residues 60–62 (DIG), 65–69 (FPDTD), and Arg-146.

Belongs to the IspF family. Homotrimer. A divalent metal cation serves as cofactor.

It catalyses the reaction 4-CDP-2-C-methyl-D-erythritol 2-phosphate = 2-C-methyl-D-erythritol 2,4-cyclic diphosphate + CMP. It participates in isoprenoid biosynthesis; isopentenyl diphosphate biosynthesis via DXP pathway; isopentenyl diphosphate from 1-deoxy-D-xylulose 5-phosphate: step 4/6. Its function is as follows. Involved in the biosynthesis of isopentenyl diphosphate (IPP) and dimethylallyl diphosphate (DMAPP), two major building blocks of isoprenoid compounds. Catalyzes the conversion of 4-diphosphocytidyl-2-C-methyl-D-erythritol 2-phosphate (CDP-ME2P) to 2-C-methyl-D-erythritol 2,4-cyclodiphosphate (ME-CPP) with a corresponding release of cytidine 5-monophosphate (CMP). This chain is 2-C-methyl-D-erythritol 2,4-cyclodiphosphate synthase, found in Bordetella avium (strain 197N).